A 431-amino-acid chain; its full sequence is tRNA(Ile)-lysidine synthase (431 aa).

25-30 lines the ATP pocket; it reads SGGLDS.

It belongs to the tRNA(Ile)-lysidine synthase family.

The protein localises to the cytoplasm. The enzyme catalyses cytidine(34) in tRNA(Ile2) + L-lysine + ATP = lysidine(34) in tRNA(Ile2) + AMP + diphosphate + H(+). Functionally, ligates lysine onto the cytidine present at position 34 of the AUA codon-specific tRNA(Ile) that contains the anticodon CAU, in an ATP-dependent manner. Cytidine is converted to lysidine, thus changing the amino acid specificity of the tRNA from methionine to isoleucine. The sequence is that of tRNA(Ile)-lysidine synthase from Legionella pneumophila (strain Lens).